A 660-amino-acid chain; its full sequence is UvrABC system protein B (660 aa).

One can recognise a Helicase ATP-binding domain in the interval 24–177 (KGFKEGNQFE…DDLARALIDL (154 aa)). 37–44 (GVTGSGKT) lines the ATP pocket. Positions 90–113 (YYDYYQPEAYVPQSDTYIAKDSSV) match the Beta-hairpin motif. The region spanning 428-594 (QIDDLVSEVN…TIQKSVRDLI (167 aa)) is the Helicase C-terminal domain. Residues 620–655 (EKHIADIEKKMKKAAAELNFEAAAEYRDKLIMLKNT) enclose the UVR domain.

Belongs to the UvrB family. Forms a heterotetramer with UvrA during the search for lesions. Interacts with UvrC in an incision complex.

The protein resides in the cytoplasm. Its function is as follows. The UvrABC repair system catalyzes the recognition and processing of DNA lesions. A damage recognition complex composed of 2 UvrA and 2 UvrB subunits scans DNA for abnormalities. Upon binding of the UvrA(2)B(2) complex to a putative damaged site, the DNA wraps around one UvrB monomer. DNA wrap is dependent on ATP binding by UvrB and probably causes local melting of the DNA helix, facilitating insertion of UvrB beta-hairpin between the DNA strands. Then UvrB probes one DNA strand for the presence of a lesion. If a lesion is found the UvrA subunits dissociate and the UvrB-DNA preincision complex is formed. This complex is subsequently bound by UvrC and the second UvrB is released. If no lesion is found, the DNA wraps around the other UvrB subunit that will check the other stand for damage. This is UvrABC system protein B from Agathobacter rectalis (strain ATCC 33656 / DSM 3377 / JCM 17463 / KCTC 5835 / VPI 0990) (Eubacterium rectale).